The following is a 299-amino-acid chain: uncharacterized protein (299 aa).

This is an uncharacterized protein from Escherichia coli (strain K12).